The following is a 432-amino-acid chain: Alpha-enolase (432 aa).

Ser-40 is a Mg(2+) binding site. Substrate is bound by residues His-158 and Glu-167. The active-site Proton donor is Glu-210. 3 residues coordinate Mg(2+): Asp-245, Glu-293, and Asp-318. Residues Glu-293 and Asp-318 each contribute to the substrate site. Lys-343 serves as the catalytic Proton acceptor. Residues 370–373 (SHRS) and Lys-394 contribute to the substrate site.

The protein belongs to the enolase family. Dimer. The cofactor is Mg(2+).

The protein resides in the cytoplasm. It carries out the reaction (2R)-2-phosphoglycerate = phosphoenolpyruvate + H2O. Its pathway is carbohydrate degradation; glycolysis; pyruvate from D-glyceraldehyde 3-phosphate: step 4/5. Functionally, multifunctional enzyme that, as well as its role in glycolysis, plays a part in various processes such as growth control, hypoxia tolerance and allergic responses. This chain is Alpha-enolase, found in Thunnus albacares (Yellowfin tuna).